A 231-amino-acid chain; its full sequence is uncharacterized protein (231 aa).

The SWIM-type zinc-finger motif lies at 43–76 (YKVKVDLDNNYFGLCTCQYKYNCKHAYALIEAYE).

This is an uncharacterized protein from Methanocaldococcus jannaschii (strain ATCC 43067 / DSM 2661 / JAL-1 / JCM 10045 / NBRC 100440) (Methanococcus jannaschii).